A 306-amino-acid polypeptide reads, in one-letter code: Glutathione transport system permease protein GsiC (306 aa).

Residues 1 to 8 (MLNYVIKR) are Cytoplasmic-facing. A helical membrane pass occupies residues 9–29 (LLGLIPTLFIVSVLVFLFVHM). At 30-102 (LPGDPARLIA…SRFMPTLWLT (73 aa)) the chain is on the periplasmic side. The region spanning 95–292 (FMPTLWLTIT…LEFILINLVV (198 aa)) is the ABC transmembrane type-1 domain. Residues 103–123 (ITSMVWAVIFGMAAGIIAAVW) form a helical membrane-spanning segment. Residues 124-134 (RNRWPDRLSMT) are Cytoplasmic-facing. A helical transmembrane segment spans residues 135-155 (IAVSGISFPAFALGMLLIQVF). Topologically, residues 156 to 168 (SVELGWLPTVGAD) are periplasmic. The chain crosses the membrane as a helical span at residues 169 to 189 (SWQHYILPSLTLGAAVAAVMA). At 190–228 (RFTRASFVDVLSEDYMRTARAKGVSETWVVLKHGLRNAM) the chain is on the cytoplasmic side. A helical membrane pass occupies residues 229–249 (IPVVTMMGLQFGFLLGGSIVV). The Periplasmic segment spans residues 250 to 277 (EKVFNWPGLGRLLVDSVEMRDYPVIQAE). The helical transmembrane segment at 278–298 (ILLFSLEFILINLVVDVLYAA) threads the bilayer. Residues 299–306 (INPAIRYK) are Cytoplasmic-facing.

It belongs to the binding-protein-dependent transport system permease family. The complex is composed of two ATP-binding proteins (GsiA), two transmembrane proteins (GsiC and GsiD) and a solute-binding protein (GsiB).

The protein localises to the cell inner membrane. Part of the ABC transporter complex GsiABCD involved in glutathione import. Probably responsible for the translocation of the substrate across the membrane. This Escherichia coli O6:H1 (strain CFT073 / ATCC 700928 / UPEC) protein is Glutathione transport system permease protein GsiC.